Here is a 581-residue protein sequence, read N- to C-terminus: Pyridine nucleotide-disulfide oxidoreductase domain-containing protein 2 (581 aa).

Residue 38 to 71 (VVIGAGHNGLVAAAYLQRLGVNTAVFERRHVIGG) coordinates FAD.

Belongs to the carotenoid/retinoid oxidoreductase family. In terms of assembly, interacts with COX5B; this interaction may contribute to localize PYROXD2 to the inner face of the inner mitochondrial membrane.

It is found in the mitochondrion matrix. Functionally, probable oxidoreductase that may play a role as regulator of mitochondrial function. The chain is Pyridine nucleotide-disulfide oxidoreductase domain-containing protein 2 from Homo sapiens (Human).